We begin with the raw amino-acid sequence, 304 residues long: Elongation factor Ts (304 aa).

The involved in Mg(2+) ion dislocation from EF-Tu stretch occupies residues 79–82 (TDFV).

It belongs to the EF-Ts family.

Its subcellular location is the cytoplasm. In terms of biological role, associates with the EF-Tu.GDP complex and induces the exchange of GDP to GTP. It remains bound to the aminoacyl-tRNA.EF-Tu.GTP complex up to the GTP hydrolysis stage on the ribosome. This chain is Elongation factor Ts, found in Polaromonas sp. (strain JS666 / ATCC BAA-500).